Here is a 385-residue protein sequence, read N- to C-terminus: tRNA-specific 2-thiouridylase MnmA (385 aa).

Residues 27-34 (AMSGGVDS) and L53 contribute to the ATP site. C121 serves as the catalytic Nucleophile. A disulfide bridge links C121 with C217. G145 contacts ATP. An interaction with tRNA region spans residues 167–169 (KDQ). The Cysteine persulfide intermediate role is filled by C217.

It belongs to the MnmA/TRMU family.

It is found in the cytoplasm. The enzyme catalyses S-sulfanyl-L-cysteinyl-[protein] + uridine(34) in tRNA + AH2 + ATP = 2-thiouridine(34) in tRNA + L-cysteinyl-[protein] + A + AMP + diphosphate + H(+). Functionally, catalyzes the 2-thiolation of uridine at the wobble position (U34) of tRNA, leading to the formation of s(2)U34. The polypeptide is tRNA-specific 2-thiouridylase MnmA (Sorangium cellulosum (strain So ce56) (Polyangium cellulosum (strain So ce56))).